The sequence spans 323 residues: Probable pectate lyase A (323 aa).

The N-terminal stretch at 1–20 (MTNFKWIVAAAGLLSGQVLA) is a signal peptide. Asn-95 is a glycosylation site (N-linked (GlcNAc...) asparagine). Residues Asp-136, Asp-165, and Asp-169 each coordinate Ca(2+). Arg-222 is a catalytic residue.

This sequence belongs to the polysaccharide lyase 1 family. Ca(2+) serves as cofactor.

It is found in the secreted. The catalysed reaction is Eliminative cleavage of (1-&gt;4)-alpha-D-galacturonan to give oligosaccharides with 4-deoxy-alpha-D-galact-4-enuronosyl groups at their non-reducing ends.. In terms of biological role, pectinolytic enzyme consist of four classes of enzymes: pectin lyase, polygalacturonase, pectin methylesterase and rhamnogalacturonase. Among pectinolytic enzymes, pectin lyase is the most important in depolymerization of pectin, since it cleaves internal glycosidic bonds of highly methylated pectins. Favors pectate, the anion, over pectin, the methyl ester. In Aspergillus niger (strain ATCC MYA-4892 / CBS 513.88 / FGSC A1513), this protein is Probable pectate lyase A (plyA).